Here is a 301-residue protein sequence, read N- to C-terminus: uncharacterized protein (301 aa).

Positions 146, 148, and 177 each coordinate a divalent metal cation.

This sequence belongs to the FAH family.

This is an uncharacterized protein from Staphylococcus saprophyticus subsp. saprophyticus (strain ATCC 15305 / DSM 20229 / NCIMB 8711 / NCTC 7292 / S-41).